Reading from the N-terminus, the 107-residue chain is Nucleoid-associated protein GbCGDNIH1_0260 (107 aa).

It belongs to the YbaB/EbfC family. As to quaternary structure, homodimer.

Its subcellular location is the cytoplasm. It localises to the nucleoid. Binds to DNA and alters its conformation. May be involved in regulation of gene expression, nucleoid organization and DNA protection. The polypeptide is Nucleoid-associated protein GbCGDNIH1_0260 (Granulibacter bethesdensis (strain ATCC BAA-1260 / CGDNIH1)).